The sequence spans 427 residues: NADPH-dependent stearoyl-CoA 9-desaturase (427 aa).

Fe cation is bound by residues H90, H94, H125, H129, H130, H304, H308, and H309.

It belongs to the fatty acid desaturase type 1 family. Interacts with the electron transfer protein Rv3230c to form a functional acyl-CoA desaturase complex. The cofactor is Fe(2+). Is rapidly degraded by a mycobacterial protein degradation system that specifically targets the residues LAA at the C-terminus, leading to a post-translational proteolytic regulation of DesA3 essential activity.

It is found in the cell membrane. It catalyses the reaction octadecanoyl-CoA + NADPH + O2 + H(+) = (9Z)-octadecenoyl-CoA + NADP(+) + 2 H2O. The protein operates within lipid metabolism; fatty acid metabolism. Is likely involved in the aerobic desaturation system responsible for the synthesis of oleic acid from stearoyl-CoA; oleic acid is a precursor of mycobacterial membrane phospholipids and triglycerides. Catalyzes the conversion of stearoyl-CoA to oleoyl-CoA by introduction of a cis double bond between carbons 9 and 10 of the acyl chain. Requires the electron transfer partner Rv3230c to pass two electrons from NADPH to its active site diiron center. Is also able to catalyze the 9-desaturation of palmitoyl-CoA to palmitoleoyl-CoA. This is NADPH-dependent stearoyl-CoA 9-desaturase (desA3) from Mycobacterium tuberculosis (strain CDC 1551 / Oshkosh).